Here is a 793-residue protein sequence, read N- to C-terminus: MTKKLTLKRKGKEPEPTNEVAASSEASDNEEEEDLLQAVKDPGEDTTDDEGIDQEYQSDSSEDLEFESDEEGNYLGRKKGDGSSEEEDDDGDEEGEEEDEEEDDSEDGESADDGDEEKPTTSKQNKSEDEPSSSKVSKKTQPPTKDLVKRDPSHPEYHDSDTSDEEDIRNTVGNIPMHWYDEYKHIGYDWDAKKIVKPPQGDQIDEFLRKIEDPNFWRTVKDPQTGQEVLITDEDIALIKRIISGRIPNKDHNEYEPWVEWFTSEVEKMPIKNVPDHKRSFLPSVSEKKRVGRMVHALKMGWMKTTEEVEREKQAKRGPKFYMLWETDTSREHMRRIHDPVSAPKRDLPGHAESYNPPPEYLFDERETKEWLKLKDEPHKRKLHFMPQKFTSLRAVPAYSRYLRERFLRCLDLYLCPRAKRVKLNIDAEYLIPKLPSPRDLQPFPTIESLVYRGHTDLVRSVSVEPKGEYIVSGSDDKTVKIWEIATGRCIRTIETEDVVRCVAWCPNAKLSIIAVATGNRLLLINPKVGDKVLVKKTDDLLAEEPSSDVIESERIKAAVQWATAEPAEQEKGVRVVINHFKPIRQVTWHGRGDYLATVMPEGANRSALIHQLSKRRSQIPFSKSKGLIQCVLFHPVKPCFFVATQHNIRIYDLVKQELVKKLLTNSKWISGMSIHPKGDNLLVSTYDKKMLWFDLDLSTKPYQTMRLHRNAVRSVAFHLRYPLFASGSDDQAVIVSHGMVYNDLLQNPLIVPLKKLQTHEKREDFGVLDVNWHPIQPWIFSTGADCTIRLYT.

Residues 1-11 (MTKKLTLKRKG) show a composition bias toward basic residues. The tract at residues 1–168 (MTKKLTLKRK…DSDTSDEEDI (168 aa)) is disordered. 3 stretches are compositionally biased toward acidic residues: residues 44–53 (EDTTDDEGID), 60–72 (SSED…DEEG), and 83–116 (SSEE…DGDE). A compositionally biased stretch (basic and acidic residues) spans 117–129 (EKPTTSKQNKSED). Positions 133-143 (SSKVSKKTQPP) are enriched in polar residues. Over residues 146–161 (DLVKRDPSHPEYHDSD) the composition is skewed to basic and acidic residues. WD repeat units follow at residues 454–495 (GHTD…RTIE), 497–535 (EDVV…KVLV), 579–621 (NHFK…SQIP), 624–662 (KSKG…LVKK), 665–704 (TNSK…KPYQ), 708–747 (LHRN…DLLQ), and 763–793 (REDF…RLYT).

This sequence belongs to the WD repeat BOP1/ERB1 family.

The protein resides in the nucleus. Its subcellular location is the nucleolus. It is found in the nucleoplasm. Functionally, required for maturation of ribosomal RNAs and formation of the large ribosomal subunit. The sequence is that of Ribosome biogenesis protein BOP1 homolog from Drosophila ananassae (Fruit fly).